A 393-amino-acid polypeptide reads, in one-letter code: NAD(P)H-quinone oxidoreductase subunit H, chloroplastic (393 aa).

Belongs to the complex I 49 kDa subunit family. NDH is composed of at least 16 different subunits, 5 of which are encoded in the nucleus.

It localises to the plastid. The protein localises to the chloroplast thylakoid membrane. It catalyses the reaction a plastoquinone + NADH + (n+1) H(+)(in) = a plastoquinol + NAD(+) + n H(+)(out). The enzyme catalyses a plastoquinone + NADPH + (n+1) H(+)(in) = a plastoquinol + NADP(+) + n H(+)(out). Functionally, NDH shuttles electrons from NAD(P)H:plastoquinone, via FMN and iron-sulfur (Fe-S) centers, to quinones in the photosynthetic chain and possibly in a chloroplast respiratory chain. The immediate electron acceptor for the enzyme in this species is believed to be plastoquinone. Couples the redox reaction to proton translocation, and thus conserves the redox energy in a proton gradient. The polypeptide is NAD(P)H-quinone oxidoreductase subunit H, chloroplastic (Panax ginseng (Korean ginseng)).